The primary structure comprises 205 residues: Allergen Asp f 15 homolog (205 aa).

This sequence belongs to the cerato-platanin family.

The protein resides in the secreted. The sequence is that of Allergen Asp f 15 homolog from Arthroderma benhamiae (strain ATCC MYA-4681 / CBS 112371) (Trichophyton mentagrophytes).